The chain runs to 361 residues: Phospho-N-acetylmuramoyl-pentapeptide-transferase (361 aa).

Transmembrane regions (helical) follow at residues 27 to 47 (ILAS…MIRW), 70 to 90 (GTPT…CLLW), 97 to 117 (SLWL…VDDY), 134 to 154 (YFWQ…NASL), 167 to 187 (TVTW…IVGS), 199 to 219 (GLAI…AYAS), 236 to 256 (TGEL…FLWY), 263 to 283 (VFMG…VAVV), 288 to 308 (LVLL…ILQV), and 338 to 358 (KVIV…LATL).

Belongs to the glycosyltransferase 4 family. MraY subfamily. Mg(2+) is required as a cofactor.

The protein localises to the cell inner membrane. The catalysed reaction is UDP-N-acetyl-alpha-D-muramoyl-L-alanyl-gamma-D-glutamyl-meso-2,6-diaminopimeloyl-D-alanyl-D-alanine + di-trans,octa-cis-undecaprenyl phosphate = di-trans,octa-cis-undecaprenyl diphospho-N-acetyl-alpha-D-muramoyl-L-alanyl-D-glutamyl-meso-2,6-diaminopimeloyl-D-alanyl-D-alanine + UMP. The protein operates within cell wall biogenesis; peptidoglycan biosynthesis. Its function is as follows. Catalyzes the initial step of the lipid cycle reactions in the biosynthesis of the cell wall peptidoglycan: transfers peptidoglycan precursor phospho-MurNAc-pentapeptide from UDP-MurNAc-pentapeptide onto the lipid carrier undecaprenyl phosphate, yielding undecaprenyl-pyrophosphoryl-MurNAc-pentapeptide, known as lipid I. This chain is Phospho-N-acetylmuramoyl-pentapeptide-transferase, found in Legionella pneumophila (strain Lens).